A 110-amino-acid chain; its full sequence is U1-lycotoxin-Ls1kk (110 aa).

Positions 1 to 20 are cleaved as a signal peptide; sequence MKFVLLFGVLLVTLFSYSSA. The propeptide occupies 21-44; it reads EMFDDFDQADEDELLSLIEKEEAR. 4 disulfide bridges follow: C47-C62, C54-C71, C61-C89, and C73-C87.

Belongs to the neurotoxin 19 (CSTX) family. 03 subfamily. In terms of tissue distribution, expressed by the venom gland.

The protein localises to the secreted. The sequence is that of U1-lycotoxin-Ls1kk from Lycosa singoriensis (Wolf spider).